A 194-amino-acid chain; its full sequence is Imidazoleglycerol-phosphate dehydratase (194 aa).

Belongs to the imidazoleglycerol-phosphate dehydratase family.

The protein resides in the cytoplasm. The catalysed reaction is D-erythro-1-(imidazol-4-yl)glycerol 3-phosphate = 3-(imidazol-4-yl)-2-oxopropyl phosphate + H2O. It functions in the pathway amino-acid biosynthesis; L-histidine biosynthesis; L-histidine from 5-phospho-alpha-D-ribose 1-diphosphate: step 6/9. The chain is Imidazoleglycerol-phosphate dehydratase from Bacillus thuringiensis (strain Al Hakam).